Here is a 184-residue protein sequence, read N- to C-terminus: Photosystem I assembly protein Ycf4 (184 aa).

2 consecutive transmembrane segments (helical) span residues 22–42 (FCWA…GISS) and 64–84 (IVMS…WSTI).

It belongs to the Ycf4 family.

The protein resides in the plastid. It is found in the chloroplast thylakoid membrane. Its function is as follows. Seems to be required for the assembly of the photosystem I complex. This is Photosystem I assembly protein Ycf4 from Piper cenocladum (Ant piper).